We begin with the raw amino-acid sequence, 98 residues long: uncharacterized protein (98 aa).

This is an uncharacterized protein from Ureaplasma parvum serovar 3 (strain ATCC 700970).